We begin with the raw amino-acid sequence, 366 residues long: Chorismate synthase (366 aa).

Arginine 48 provides a ligand contact to NADP(+). FMN is bound by residues 125–127 (RSS), glycine 285, 300–304 (KPTPS), and arginine 327.

Belongs to the chorismate synthase family. The cofactor is FMNH2.

It carries out the reaction 5-O-(1-carboxyvinyl)-3-phosphoshikimate = chorismate + phosphate. The protein operates within metabolic intermediate biosynthesis; chorismate biosynthesis; chorismate from D-erythrose 4-phosphate and phosphoenolpyruvate: step 7/7. Functionally, catalyzes the anti-1,4-elimination of the C-3 phosphate and the C-6 proR hydrogen from 5-enolpyruvylshikimate-3-phosphate (EPSP) to yield chorismate, which is the branch point compound that serves as the starting substrate for the three terminal pathways of aromatic amino acid biosynthesis. This reaction introduces a second double bond into the aromatic ring system. The chain is Chorismate synthase from Methanococcoides burtonii (strain DSM 6242 / NBRC 107633 / OCM 468 / ACE-M).